The primary structure comprises 364 residues: 4-hydroxythreonine-4-phosphate dehydrogenase (364 aa).

Positions 148 and 149 each coordinate substrate. 3 residues coordinate a divalent metal cation: His177, His216, and His301. Positions 309, 318, and 327 each coordinate substrate.

Belongs to the PdxA family. As to quaternary structure, homodimer. Zn(2+) serves as cofactor. Mg(2+) is required as a cofactor. Requires Co(2+) as cofactor.

The protein localises to the cytoplasm. The enzyme catalyses 4-(phosphooxy)-L-threonine + NAD(+) = 3-amino-2-oxopropyl phosphate + CO2 + NADH. It functions in the pathway cofactor biosynthesis; pyridoxine 5'-phosphate biosynthesis; pyridoxine 5'-phosphate from D-erythrose 4-phosphate: step 4/5. Catalyzes the NAD(P)-dependent oxidation of 4-(phosphooxy)-L-threonine (HTP) into 2-amino-3-oxo-4-(phosphooxy)butyric acid which spontaneously decarboxylates to form 3-amino-2-oxopropyl phosphate (AHAP). The polypeptide is 4-hydroxythreonine-4-phosphate dehydrogenase (Campylobacter jejuni subsp. jejuni serotype O:23/36 (strain 81-176)).